Here is a 486-residue protein sequence, read N- to C-terminus: Glutamate--tRNA ligase (486 aa).

The short motif at 11 to 21 is the 'HIGH' region element; the sequence is PSPTGVVHIGN. The 'KMSKS' region motif lies at 255–259; sequence KLSKR. Residue K258 participates in ATP binding.

This sequence belongs to the class-I aminoacyl-tRNA synthetase family. Glutamate--tRNA ligase type 1 subfamily. In terms of assembly, monomer.

It is found in the cytoplasm. It catalyses the reaction tRNA(Glu) + L-glutamate + ATP = L-glutamyl-tRNA(Glu) + AMP + diphosphate. Catalyzes the attachment of glutamate to tRNA(Glu) in a two-step reaction: glutamate is first activated by ATP to form Glu-AMP and then transferred to the acceptor end of tRNA(Glu). In Streptococcus pneumoniae (strain CGSP14), this protein is Glutamate--tRNA ligase.